A 123-amino-acid polypeptide reads, in one-letter code: Small ribosomal subunit protein uS12cz/uS12cy (123 aa).

Belongs to the universal ribosomal protein uS12 family. In terms of assembly, part of the 30S ribosomal subunit.

Its subcellular location is the plastid. It localises to the chloroplast. With S4 and S5 plays an important role in translational accuracy. Located at the interface of the 30S and 50S subunits. The chain is Small ribosomal subunit protein uS12cz/uS12cy (rps12-A) from Daucus carota (Wild carrot).